The chain runs to 258 residues: Phosphate import ATP-binding protein PstB (258 aa).

The ABC transporter domain occupies 5-247 (LDLKGVNIYY…EKIFSNPSQK (243 aa)). Residue 37-44 (GPSGCGKT) participates in ATP binding.

Belongs to the ABC transporter superfamily. Phosphate importer (TC 3.A.1.7) family. The complex is composed of two ATP-binding proteins (PstB), two transmembrane proteins (PstC and PstA) and a solute-binding protein (PstS).

Its subcellular location is the cell membrane. It catalyses the reaction phosphate(out) + ATP + H2O = ADP + 2 phosphate(in) + H(+). Part of the ABC transporter complex PstSACB involved in phosphate import. Responsible for energy coupling to the transport system. The sequence is that of Phosphate import ATP-binding protein PstB from Mycolicibacterium paratuberculosis (strain ATCC BAA-968 / K-10) (Mycobacterium paratuberculosis).